A 785-amino-acid polypeptide reads, in one-letter code: Endonuclease MutS2 (785 aa).

334–341 contributes to the ATP binding site; the sequence is GPNTGGKT. One can recognise a Smr domain in the interval 710-785; sequence LDLRGYNVED…GVGATIAELK (76 aa).

The protein belongs to the DNA mismatch repair MutS family. MutS2 subfamily. Homodimer. Binds to stalled ribosomes, contacting rRNA.

Its function is as follows. Endonuclease that is involved in the suppression of homologous recombination and thus may have a key role in the control of bacterial genetic diversity. Functionally, acts as a ribosome collision sensor, splitting the ribosome into its 2 subunits. Detects stalled/collided 70S ribosomes which it binds and splits by an ATP-hydrolysis driven conformational change. Acts upstream of the ribosome quality control system (RQC), a ribosome-associated complex that mediates the extraction of incompletely synthesized nascent chains from stalled ribosomes and their subsequent degradation. Probably generates substrates for RQC. This Brevibacillus brevis (strain 47 / JCM 6285 / NBRC 100599) protein is Endonuclease MutS2.